The chain runs to 387 residues: METVAAIKTLIQQLAQSTDQFGRAEINDALRELQYSLETPFDTVMRMSLDTCQVAVARIGSDLGLFKHLSQCASPQSAEELADHLGCGRELMSRLLRYMASVRMVQQTDDIKYISSNITQTLAVPGLEAGMRHAFENLWPVLMALPDFLAERKYPDIVDAKDTAFQKAFNTDQDCFHWLATQPTRIANFKVLLTDERTPNFLSTFPLEKELGSWSAEPEKALFVDIGGGMGHACIRLREKYPNQPGRVILQDLPPVLQAAQATLPLSGIESMPHNFHTPQPVQGAKFYFLRLILRDFPDHQALEILQNIVPAMDAESRIVIDDGVPPEKGARWAETGTDICIMSALGSKERTQRQWEELAAKAGLQLQALYQYTWPVVNAAMVFSLQ.

Position 135–148 (135–148) interacts with substrate; that stretch reads FENLWPVLMALPDF. A substrate binding region spans residues 175–195; that stretch reads CFHWLATQPTRIANFKVLLTD. S-adenosyl-L-methionine-binding positions include 227-228, Asp252, 275-276, and Arg291; these read GG and NF.

Belongs to the class I-like SAM-binding methyltransferase superfamily. Cation-independent O-methyltransferase family.

Its function is as follows. O-methyltransferase; part of the gene cluster 23 that mediates the biosynthesis of a family of 2-pyridones known as leporins. The hybrid PKS-NRPS synthetase lepA and the enoyl reductase lepG are responsible for fusion of phenylalanine with a hexaketide and subsequent release of the stable tetramic acid precursor, pre-leporin C. Because lepA lacks a designated enoylreductase (ER) domain, the required activity is provided the enoyl reductase lepG. It is possible that the dehydrogenase lepF also participates in production of pre-leporin C. Cytochrome P450 monooxygenase lepH is then required for the ring expansion step to yield leporin C. Leporin C is then presumably further oxidized by the N-hydroxylase lepD to form leporin B. LepI may possess a function in biosynthesis upstream of lepA. Leporin B is further oxidized in the presence of ferric ion to give the leporin B trimer-iron chelate, but whether or not this reaction is catalyzed by an enzyme in the pathway or by ferric ion is not determined yet. The chain is O-methyltransferase lepI from Aspergillus flavus (strain ATCC 200026 / FGSC A1120 / IAM 13836 / NRRL 3357 / JCM 12722 / SRRC 167).